We begin with the raw amino-acid sequence, 359 residues long: Protein-arginine kinase (359 aa).

The 233-residue stretch at 25-257 (IVISSRVRLA…QQVIEQERML (233 aa)) folds into the Phosphagen kinase C-terminal domain. Residues 28–32 (SSRVR), H93, R128, 179–183 (RASLM), and 210–215 (RGIYGE) contribute to the ATP site. The RDXXRA motif of the pArg binding pocket involved in allosteric regulation motif lies at 340–345 (RDAKRA).

This sequence belongs to the ATP:guanido phosphotransferase family.

It carries out the reaction L-arginyl-[protein] + ATP = N(omega)-phospho-L-arginyl-[protein] + ADP + H(+). Its activity is regulated as follows. Appears to be allosterically activated by the binding of pArg-containing polypeptides to the pArg-binding pocket localized in the C-terminal domain of McsB. In terms of biological role, catalyzes the specific phosphorylation of arginine residues in proteins. This chain is Protein-arginine kinase, found in Syntrophomonas wolfei subsp. wolfei (strain DSM 2245B / Goettingen).